We begin with the raw amino-acid sequence, 242 residues long: HTH-type transcriptional regulator GadW (242 aa).

The HTH araC/xylS-type domain maps to 139–236 (GKVERLISFD…GVTPHQFSQH (98 aa)). DNA-binding regions (H-T-H motif) lie at residues 156 to 177 (RDIA…QDEN) and 203 to 226 (LHTI…RQYY).

In terms of assembly, homodimer.

Functionally, depending on the conditions (growth phase and medium), acts as a positive or negative regulator of gadA and gadBC. Repression occurs directly or via the repression of the expression of gadX. Activation occurs directly by the binding of GadW to the gadA and gadBC promoters. The protein is HTH-type transcriptional regulator GadW (gadW) of Escherichia coli O6:H1 (strain CFT073 / ATCC 700928 / UPEC).